The primary structure comprises 294 residues: Transcription repressor OFP14 (294 aa).

The span at 49 to 60 (SFKHRRRSSKTR) shows a compositional bias: basic residues. Disordered regions lie at residues 49–72 (SFKHRRRSSKTRFSKEEPVYHQDS), 96–129 (DDQEDDQHQARVTKNKEKRESSSDDSDDDDDDDD), and 141–185 (AVYD…SRST). 2 stretches are compositionally biased toward basic and acidic residues: residues 61 to 72 (FSKEEPVYHQDS) and 96 to 117 (DDQEDDQHQARVTKNKEKRESS). The segment covering 118-128 (SDDSDDDDDDD) has biased composition (acidic residues). The segment covering 164 to 185 (SSEGRPSMETTSTSSERQSRST) has biased composition (low complexity). The 65-residue stretch at 195-259 (VLRYTDEPQE…LSAFVDLIIA (65 aa)) folds into the OVATE domain.

Interacts with KNAT2 and KNAT3. In terms of tissue distribution, expressed in roots, rosette and cauline leaves, shoots, stems, flower buds and siliques.

It is found in the nucleus. Functionally, transcriptional repressor that may regulate multiple aspects of plant growth and development through the regulation of BEL1-LIKE (BLH) and KNOX TALE (KNAT) homeodomain transcription factors. The polypeptide is Transcription repressor OFP14 (OFP14) (Arabidopsis thaliana (Mouse-ear cress)).